A 166-amino-acid chain; its full sequence is Cyanate hydratase (166 aa).

Active-site residues include R92, E95, and S118.

The protein belongs to the cyanase family.

The enzyme catalyses cyanate + hydrogencarbonate + 3 H(+) = NH4(+) + 2 CO2. In terms of biological role, catalyzes the reaction of cyanate with bicarbonate to produce ammonia and carbon dioxide. The polypeptide is Cyanate hydratase (Zea mays (Maize)).